The following is a 1097-amino-acid chain: Cyclin-T (1097 aa).

Disordered stretches follow at residues 319-782 (SNIT…SNGI), 804-936 (LLKP…SLQA), and 985-1097 (AAPV…YNKK). A compositionally biased stretch (basic and acidic residues) spans 332–350 (DSRDRDRDRERERERERDP). Low complexity-rich tracts occupy residues 373-390 (SSSV…SSSS), 420-456 (PSSH…GRPS), 467-478 (GMPPVGVGMPPH), and 489-511 (PQQP…SGMS). Positions 580–591 (LPYSQSQSYGHM) are enriched in polar residues. The segment covering 592-606 (QQQPVPQSQQQQMPP) has biased composition (low complexity). The segment covering 609–620 (SQHSLQSKNSLF) has biased composition (polar residues). Positions 652-675 (HDYKLNSHPRDKESPKKERLTPTK) are enriched in basic and acidic residues. Residues 687 to 698 (GSGNSSSGSGSS) are compositionally biased toward low complexity. The segment covering 860–870 (GEIKEESSSKS) has biased composition (basic and acidic residues). Over residues 871-883 (EKKKKKDKHKHKE) the composition is skewed to basic residues. A compositionally biased stretch (basic and acidic residues) spans 884 to 895 (KDKSKDKTEKEE). Residue serine 916 is modified to Phosphoserine. Residues 993–1007 (GAGGGGYSSSGGSSS) show a composition bias toward gly residues. The segment covering 1016 to 1031 (SDRDRDKESKKNKSQD) has biased composition (basic and acidic residues). A compositionally biased stretch (gly residues) spans 1037–1050 (GAGGGIFNPLGGAG). The span at 1087–1097 (APPPMPVYNKK) shows a compositional bias: pro residues.

Belongs to the cyclin family. Cyclin C subfamily. In terms of assembly, component of the super elongation complex (SEC), at least composed of Ell, Cdk9, cyclin-T (CycT), lilli and ear. Associates with CDK9 to form P-TEFb.

It localises to the nucleus. In terms of biological role, regulatory subunit of the cyclin-dependent kinase pair (CDK9/cyclin T) complex, also called positive transcription elongation factor B (P-TEFb), which is proposed to facilitate the transition from abortive to production elongation by phosphorylating the CTD (carboxy-terminal domain) of the large subunit of RNA polymerase II (RNAP II). This is Cyclin-T (CycT) from Drosophila melanogaster (Fruit fly).